We begin with the raw amino-acid sequence, 376 residues long: TATA box-binding protein-like 2 (376 aa).

The interval 103 to 184 is disordered; the sequence is PDEVTQENKD…SDSLSLASIT (82 aa). The segment covering 108–122 has biased composition (basic and acidic residues); sequence QENKDQPVISKHETE. The span at 126 to 159 shows a compositional bias: low complexity; sequence ESQSPQSRLPSPSEQDVGLGLNSSSLSNSHSQLH. Over residues 175 to 184 the composition is skewed to polar residues; sequence SDSLSLASIT.

This sequence belongs to the TBP family. In terms of assembly, interacts with TAF3.

It is found in the cytoplasm. The protein resides in the nucleus. In terms of biological role, transcription factor required in complex with TAF3 for the differentiation of myoblasts into myocytes. The complex replaces TFIID at specific promoters at an early stage in the differentiation process. This Pan troglodytes (Chimpanzee) protein is TATA box-binding protein-like 2.